A 546-amino-acid chain; its full sequence is Nicotinic acid-CoA ligase olcI (546 aa).

194–205 serves as a coordination point for AMP; it reads MFSTSGTSGLPK. Positions 445 to 523 are AMP-binding; sequence EIEAVLLKDP…ESLPRTGIGK (79 aa).

It belongs to the ATP-dependent AMP-binding enzyme family.

The catalysed reaction is nicotinate + ATP + CoA = nicotinyl-CoA + AMP + diphosphate. It participates in secondary metabolite biosynthesis; terpenoid biosynthesis. Functionally, nicotinic acid-CoA ligase; part of the gene cluster that mediates the biosynthesis of 15-deoxyoxalicine B. The first step of the pathway is the synthesis of nicotinyl-CoA from nicotinic acid by the nicotinic acid-CoA ligase olcI. Nicotinyl-CoA is then a substrate of polyketide synthase olcA to produce 4-hydroxy-6-(3-pyridinyl)-2H-pyran-2-one (HPPO) which is further prenylated by the polyprenyl transferase olcH to yield geranylgeranyl-HPPO. Geranylgeranyl pyrophosphate is provided by the cluster-specific geranylgeranyl pyrophosphate synthase olcC. The FAD-dependent monooxygenase olcE catalyzes the epoxidation of geranylgeranyl-HPPO and the terpene cyclase olcD catalyzes the cyclization of the terpenoid component, resulting in the formation of the tricyclic terpene moiety seen in predecaturin E. The cytochrome P450 monooxygenase then catalyzes the allylic oxidation of predecaturin E, which is followed by spirocylization with concomitant loss of one molecule of water to form decaturin E. Decaturin E is the substrate of the cytochrome P450 monooxygenase olcJ which hydroxylates it at the C-29 position to form decaturin F. The short-chain dehydrogenase/reductase olcF may catalyze the oxidation of decaturin F to generate the 29-hydroxyl-27-one intermediate, and subsequent hemiacetal formation probably leads to the formation of decaturin C. The dioxygenase olcK may be a peroxisomal enzyme that catalyzes the hydroxylation of decaturin C into decaturin A once decaturin C is shuttled into the peroxisome by the MFS transporter olcL. Finally the cytochrome P450 monooxygenase olcB catalyzes the oxidative rearrangement to yield 15-deoxyoxalicine B. In the absence of olcJ, decaturin E may be shunted to a pathway in which it is oxidized to a ketone, possibly by olcF, to form decaturin D, which undergoes further allylic oxidation to yield decaturin G. Moreover, in the absence of oclK or oclL, oclB can convert decaturin C into 15-deoxyoxalicine A. In Penicillium canescens, this protein is Nicotinic acid-CoA ligase olcI.